Consider the following 352-residue polypeptide: C5a anaphylatoxin chemotactic receptor 1 (352 aa).

Topologically, residues 1–38 (MASMNFSPPEYPDYGTATLDPNIFVDESLNTPKLSVPD) are extracellular. 2 positions are modified to sulfotyrosine: tyrosine 11 and tyrosine 14. The chain crosses the membrane as a helical span at residues 39–65 (MIALVIFVMVFLVGVPGNFLVVWVTGF). Residues 66 to 70 (EVRRT) are Cytoplasmic-facing. The helical transmembrane segment at 71 to 94 (INAIWFLNLAVADLLSCLALPILF) threads the bilayer. The Extracellular segment spans residues 95-111 (SSIVQQGYWPFGNAACR). Cysteine 110 and cysteine 189 form a disulfide bridge. A helical membrane pass occupies residues 112-133 (ILPSLILLNMYASILLLTTISA). Residues 134 to 154 (DRFVLVFNPIWCQNYRGPQLA) are Cytoplasmic-facing. A helical membrane pass occupies residues 155–175 (WAACSVAWAVALLLTVPSFIF). Topologically, residues 176–202 (RGVHTEYFPFWMTCGVDYSGVGVLVER) are extracellular. The helical transmembrane segment at 203-228 (GVAILRLLMGFLGPLVILSICYTFLL) threads the bilayer. The Cytoplasmic segment spans residues 229–244 (IRTWSRKATRSTKTLK). Residues 245 to 267 (VVVAVVVSFFVLWLPYQVTGMMM) form a helical membrane-spanning segment. Residues 268-284 (ALFYKHSESFRRVSRLD) lie on the Extracellular side of the membrane. Residues 285–305 (SLCVAVAYINCCINPIIYVLA) form a helical membrane-spanning segment. The Cytoplasmic portion of the chain corresponds to 306 to 352 (AQGFHSRFLKSLPARLRQVLAEESVGRDSKSITLSTVDTPAQKSQGV). Phosphoserine occurs at positions 316, 329, 334, 336, and 340.

The protein belongs to the G-protein coupled receptor 1 family. In terms of assembly, homodimer. May also form higher-order oligomers. Interacts (when phosphorylated) with ARRB1 and ARRB2; the interaction is associated with internalization of C5aR. In terms of processing, sulfation plays a critical role in the association of C5aR with C5a, but no significant role in the ability of the receptor to transduce a signal and mobilize calcium in response to a small peptide agonist. Phosphorylated on serine residues in response to C5a binding, resulting in internalization of the receptor and short-term desensitization to C5a.

It is found in the cell membrane. The protein resides in the cytoplasmic vesicle. Its function is as follows. Receptor for the chemotactic and inflammatory peptide anaphylatoxin C5a. The ligand interacts with at least two sites on the receptor: a high-affinity site on the extracellular N-terminus, and a second site in the transmembrane region which activates downstream signaling events. Receptor activation stimulates chemotaxis, granule enzyme release, intracellular calcium release and superoxide anion production. This Canis lupus familiaris (Dog) protein is C5a anaphylatoxin chemotactic receptor 1 (C5AR1).